The sequence spans 470 residues: Diaminobutyrate--2-oxoglutarate aminotransferase (470 aa).

N6-(pyridoxal phosphate)lysine is present on lysine 304.

The protein belongs to the class-III pyridoxal-phosphate-dependent aminotransferase family. Pyridoxal 5'-phosphate is required as a cofactor.

It catalyses the reaction L-2,4-diaminobutanoate + 2-oxoglutarate = L-aspartate 4-semialdehyde + L-glutamate. It functions in the pathway siderophore biosynthesis; rhizobactin biosynthesis. In Rhizobium meliloti (strain 1021) (Ensifer meliloti), this protein is Diaminobutyrate--2-oxoglutarate aminotransferase (rhbA).